The chain runs to 504 residues: Ribosomal protein uS12 methylthiotransferase RimO (504 aa).

In terms of domain architecture, MTTase N-terminal spans 19-135 (KKVGFVSLGC…ILAASGIEPR (117 aa)). [4Fe-4S] cluster is bound by residues Cys-28, Cys-64, Cys-98, Cys-214, Cys-218, and Cys-221. The Radical SAM core domain occupies 200 to 430 (ATPKYMAYIK…MSLQKQISKK (231 aa)). The TRAM domain occupies 433–504 (KALIGREFDV…HDYDLVARLL (72 aa)).

It belongs to the methylthiotransferase family. RimO subfamily. Requires [4Fe-4S] cluster as cofactor.

Its subcellular location is the cytoplasm. The catalysed reaction is L-aspartate(89)-[ribosomal protein uS12]-hydrogen + (sulfur carrier)-SH + AH2 + 2 S-adenosyl-L-methionine = 3-methylsulfanyl-L-aspartate(89)-[ribosomal protein uS12]-hydrogen + (sulfur carrier)-H + 5'-deoxyadenosine + L-methionine + A + S-adenosyl-L-homocysteine + 2 H(+). In terms of biological role, catalyzes the methylthiolation of an aspartic acid residue of ribosomal protein uS12. This is Ribosomal protein uS12 methylthiotransferase RimO from Koribacter versatilis (strain Ellin345).